The primary structure comprises 289 residues: 4-diphosphocytidyl-2-C-methyl-D-erythritol kinase (289 aa).

Lysine 15 is an active-site residue. An ATP-binding site is contributed by proline 100–alanine 110. Residue aspartate 140 is part of the active site.

The protein belongs to the GHMP kinase family. IspE subfamily.

The catalysed reaction is 4-CDP-2-C-methyl-D-erythritol + ATP = 4-CDP-2-C-methyl-D-erythritol 2-phosphate + ADP + H(+). Its pathway is isoprenoid biosynthesis; isopentenyl diphosphate biosynthesis via DXP pathway; isopentenyl diphosphate from 1-deoxy-D-xylulose 5-phosphate: step 3/6. Its function is as follows. Catalyzes the phosphorylation of the position 2 hydroxy group of 4-diphosphocytidyl-2C-methyl-D-erythritol. This Anaplasma marginale (strain Florida) protein is 4-diphosphocytidyl-2-C-methyl-D-erythritol kinase.